The following is a 476-amino-acid chain: Serine/threonine-protein kinase PknF (476 aa).

Residues 12–279 (FTIVRQLGSG…FARALGHRLG (268 aa)) form the Protein kinase domain. Residues 18-26 (LGSGGMGEV) and lysine 41 each bind ATP. Catalysis depends on aspartate 137, which acts as the Proton acceptor. The chain crosses the membrane as a helical span at residues 306–326 (TAVIVPAVLAMLLVMAVAVAV). Residues 332–376 (ADDERAAQPARTRTTTSAGTTTSVAPASTTRPAPTTPTTTGAADT) are disordered. The segment covering 338–376 (AQPARTRTTTSAGTTTSVAPASTTRPAPTTPTTTGAADT) has biased composition (low complexity).

The protein belongs to the protein kinase superfamily. Ser/Thr protein kinase family. Autophosphorylated. Dephosphorylated by PstP.

It is found in the cell membrane. It carries out the reaction L-seryl-[protein] + ATP = O-phospho-L-seryl-[protein] + ADP + H(+). The catalysed reaction is L-threonyl-[protein] + ATP = O-phospho-L-threonyl-[protein] + ADP + H(+). A serine/threonine-protein kinase, acts on HupB in vitro. The sequence is that of Serine/threonine-protein kinase PknF from Mycobacterium tuberculosis (strain ATCC 25177 / H37Ra).